The chain runs to 162 residues: UPF0460 protein y4vQ (162 aa).

This sequence belongs to the UPF0460 family.

The chain is UPF0460 protein y4vQ from Sinorhizobium fredii (strain NBRC 101917 / NGR234).